The primary structure comprises 303 residues: 1D-myo-inositol 2-acetamido-2-deoxy-alpha-D-glucopyranoside deacetylase 1 (303 aa).

Zn(2+)-binding residues include H15, D18, and H157.

This sequence belongs to the MshB deacetylase family. Zn(2+) serves as cofactor.

The enzyme catalyses 1D-myo-inositol 2-acetamido-2-deoxy-alpha-D-glucopyranoside + H2O = 1D-myo-inositol 2-amino-2-deoxy-alpha-D-glucopyranoside + acetate. In terms of biological role, catalyzes the deacetylation of 1D-myo-inositol 2-acetamido-2-deoxy-alpha-D-glucopyranoside (GlcNAc-Ins) in the mycothiol biosynthesis pathway. This chain is 1D-myo-inositol 2-acetamido-2-deoxy-alpha-D-glucopyranoside deacetylase 1, found in Saccharopolyspora erythraea (strain ATCC 11635 / DSM 40517 / JCM 4748 / NBRC 13426 / NCIMB 8594 / NRRL 2338).